A 279-amino-acid chain; its full sequence is Release factor glutamine methyltransferase (279 aa).

The S-adenosyl-L-methionine site is built by Glu-141 and Asn-187. Residue 187 to 190 (NPPY) coordinates substrate.

This sequence belongs to the protein N5-glutamine methyltransferase family. PrmC subfamily.

It carries out the reaction L-glutaminyl-[peptide chain release factor] + S-adenosyl-L-methionine = N(5)-methyl-L-glutaminyl-[peptide chain release factor] + S-adenosyl-L-homocysteine + H(+). Functionally, methylates the class 1 translation termination release factors RF1/PrfA and RF2/PrfB on the glutamine residue of the universally conserved GGQ motif. In Corynebacterium glutamicum (strain ATCC 13032 / DSM 20300 / JCM 1318 / BCRC 11384 / CCUG 27702 / LMG 3730 / NBRC 12168 / NCIMB 10025 / NRRL B-2784 / 534), this protein is Release factor glutamine methyltransferase.